The chain runs to 296 residues: Cytidine deaminase (296 aa).

2 consecutive CMP/dCMP-type deaminase domains span residues 47-167 (ELNE…FGPS) and 186-296 (DSND…VEPE). 88-90 (NIE) contacts substrate. Histidine 101 is a Zn(2+) binding site. The active-site Proton donor is the glutamate 103. Cysteine 128 and cysteine 131 together coordinate Zn(2+).

It belongs to the cytidine and deoxycytidylate deaminase family. Homodimer. It depends on Zn(2+) as a cofactor.

It carries out the reaction cytidine + H2O + H(+) = uridine + NH4(+). The enzyme catalyses 2'-deoxycytidine + H2O + H(+) = 2'-deoxyuridine + NH4(+). Its function is as follows. This enzyme scavenges exogenous and endogenous cytidine and 2'-deoxycytidine for UMP synthesis. This chain is Cytidine deaminase, found in Shewanella halifaxensis (strain HAW-EB4).